We begin with the raw amino-acid sequence, 42 residues long: Cytochrome b559 subunit beta (42 aa).

Residues 17–33 form a helical membrane-spanning segment; the sequence is WLTIHALAVPTVFFLGA. H21 serves as a coordination point for heme.

The protein belongs to the PsbE/PsbF family. In terms of assembly, heterodimer of an alpha subunit and a beta subunit. PSII is composed of 1 copy each of membrane proteins PsbA, PsbB, PsbC, PsbD, PsbE, PsbF, PsbH, PsbI, PsbJ, PsbK, PsbL, PsbM, PsbT, PsbX, PsbY, PsbZ, Psb30/Ycf12, at least 3 peripheral proteins of the oxygen-evolving complex and a large number of cofactors. It forms dimeric complexes. Heme b serves as cofactor.

The protein resides in the plastid. It localises to the chloroplast thylakoid membrane. In terms of biological role, this b-type cytochrome is tightly associated with the reaction center of photosystem II (PSII). PSII is a light-driven water:plastoquinone oxidoreductase that uses light energy to abstract electrons from H(2)O, generating O(2) and a proton gradient subsequently used for ATP formation. It consists of a core antenna complex that captures photons, and an electron transfer chain that converts photonic excitation into a charge separation. This Emiliania huxleyi (Coccolithophore) protein is Cytochrome b559 subunit beta.